Reading from the N-terminus, the 193-residue chain is Thymidine kinase (193 aa).

ATP contacts are provided by residues serine 9–serine 16 and aspartate 87–glutamine 90. The Proton acceptor role is filled by glutamate 88. Residues cysteine 145, cysteine 147, cysteine 182, and histidine 185 each coordinate Zn(2+).

The protein belongs to the thymidine kinase family. Homotetramer.

The protein resides in the cytoplasm. The catalysed reaction is thymidine + ATP = dTMP + ADP + H(+). The chain is Thymidine kinase from Haemophilus influenzae (strain 86-028NP).